Consider the following 406-residue polypeptide: Eukaryotic initiation factor 4A-I (406 aa).

A disordered region spans residues 1–21 (MSASQDSRSRDNGPDGMEPEG). Serine 2 is subject to N-acetylserine. At serine 4 the chain carries Phosphoserine. The Q motif signature appears at 32-60 (DSFDDMNLSESLLRGIYAYGFEKPSAIQQ). Positions 63 to 234 (ILPCIKGYDV…KKFMRDPIRI (172 aa)) constitute a Helicase ATP-binding domain. 76–83 (AQSGTGKT) serves as a coordination point for ATP. Lysine 118 carries the N6-acetyllysine modification. Residue lysine 146 forms a Glycyl lysine isopeptide (Lys-Gly) (interchain with G-Cter in SUMO2) linkage. Phosphothreonine is present on threonine 158. An N6-acetyllysine modification is found at lysine 174. Residues 182-185 (DEAD) carry the DEAD box motif. Lysine 193 carries the post-translational modification N6-acetyllysine. A Glycyl lysine isopeptide (Lys-Gly) (interchain with G-Cter in SUMO2) cross-link involves residue lysine 225. Lysine 238 carries the N6-acetyllysine; alternate modification. Lysine 238 is covalently cross-linked (Glycyl lysine isopeptide (Lys-Gly) (interchain with G-Cter in SUMO2); alternate). The region spanning 245-406 (GIRQFYINVE…EMPLNVADLI (162 aa)) is the Helicase C-terminal domain. Glycyl lysine isopeptide (Lys-Gly) (interchain with G-Cter in SUMO2) cross-links involve residues lysine 309, lysine 369, and lysine 381.

The protein belongs to the DEAD box helicase family. eIF4A subfamily. As to quaternary structure, eIF4F is a multi-subunit complex, the composition of which varies with external and internal environmental conditions. It is composed of at least EIF4A, EIF4E and EIF4G1/EIF4G3. Interacts with PAIP1, EIF4E and UPF2. Found in a complex with XPO7, EIF4A1, ARHGAP1, VPS26A, VPS29, VPS35 and SFN. May interact with NOM1. Interacts with PDCD4; this interferes with the interaction between EIF4A and EIF4G. Interacts with RBM4. Interacts with DDX3X in an RNA-independent manner. Interacts with PKP1 (via N-terminus); the interaction promotes EIF4A1 recruitment to the cap-dependent translation complex and EIF4A1 ATPase activity.

Its subcellular location is the cytoplasm. The protein resides in the perinuclear region. The protein localises to the cell membrane. It localises to the stress granule. It catalyses the reaction ATP + H2O = ADP + phosphate + H(+). ATP-dependent RNA helicase which is a subunit of the eIF4F complex involved in cap recognition and is required for mRNA binding to ribosome. In the current model of translation initiation, eIF4A unwinds RNA secondary structures in the 5'-UTR of mRNAs which is necessary to allow efficient binding of the small ribosomal subunit, and subsequent scanning for the initiator codon. As a result, promotes cell proliferation and growth. This chain is Eukaryotic initiation factor 4A-I (EIF4A1), found in Macaca fascicularis (Crab-eating macaque).